The following is a 627-amino-acid chain: DNA-directed RNA polymerase subunit gamma (627 aa).

The Zn(2+) site is built by Cys70, Cys72, Cys85, and Cys88. Positions 468, 470, and 472 each coordinate Mg(2+).

It belongs to the RNA polymerase beta' chain family. RpoC1 subfamily. In terms of assembly, in cyanobacteria the RNAP catalytic core is composed of 2 alpha, 1 beta, 1 beta', 1 gamma and 1 omega subunit. When a sigma factor is associated with the core the holoenzyme is formed, which can initiate transcription. The cofactor is Mg(2+). It depends on Zn(2+) as a cofactor.

It catalyses the reaction RNA(n) + a ribonucleoside 5'-triphosphate = RNA(n+1) + diphosphate. Functionally, DNA-dependent RNA polymerase catalyzes the transcription of DNA into RNA using the four ribonucleoside triphosphates as substrates. The chain is DNA-directed RNA polymerase subunit gamma from Synechococcus sp. (strain JA-3-3Ab) (Cyanobacteria bacterium Yellowstone A-Prime).